A 512-amino-acid chain; its full sequence is Sodium-dependent phosphate transport protein 1, chloroplastic (512 aa).

Residues 1-59 (MNARALLCSSNIHSLYTSNRPPEKTSSSRSLRNLKPSPKSLRVWIYPRNRSSVFRVLVR) constitute a chloroplast transit peptide. 11 helical membrane-spanning segments follow: residues 103-123 (WVIVLLCFSAFLLCNMDRVNM), 141-161 (VGLIQSSFFWGYLLTQIAGGI), 171-191 (VLGFGVIWWSIATILTPVAAK), 192-212 (LGLPYLLVVRAFMGVGEGVAM), 234-254 (LVYSGMYLGSVTGLAFSPFLI), 257-277 (FGWPSVFYSFGSLGTVWLTLW), 323-343 (VWALISCHFCHNWGTFILLTW), 361-381 (LLSVFPWMTMAISANAGGWIA), 401-421 (IGFLGPAFFLTQLKHIDSPTM), 453-473 (GVLLGLSNTAGVLAGVLGTAA), and 486-506 (VFTISVGLYLVGTVIWNLFST).

The protein belongs to the major facilitator superfamily. Sodium/anion cotransporter (TC 2.A.1.14) family. Expressed in flower buds, sepals of mature flowers and mature leaves, less in senescent leaves and at low levels in roots.

It is found in the plastid. The protein localises to the chloroplast thylakoid membrane. In terms of biological role, specific for inorganic phosphate transport across the thylakoid membrane in a sodium dependent manner. Binds glutamate but cannot transport it. May act as an ascorbate transporter at the thylakoid membrane. The polypeptide is Sodium-dependent phosphate transport protein 1, chloroplastic (ANTR1) (Arabidopsis thaliana (Mouse-ear cress)).